A 247-amino-acid polypeptide reads, in one-letter code: Zinc finger protein YPR015C (247 aa).

C2H2-type zinc fingers lie at residues 185–207 (KQCP…YLIH) and 213–237 (FKCT…LRTH).

The polypeptide is Zinc finger protein YPR015C (Saccharomyces cerevisiae (strain ATCC 204508 / S288c) (Baker's yeast)).